Here is an 834-residue protein sequence, read N- to C-terminus: Membrane-associated lipoprotein (834 aa).

Residues 1-25 form the signal peptide; that stretch reads MKKNKLTTLALILPITILTPIVIAS. Cys26 is lipidated: N-palmitoyl cysteine. Cys26 carries S-diacylglycerol cysteine lipidation. In terms of domain architecture, Lipoprotein-associated type-17 spans 143 to 237; that stretch reads RLKDTFDFKL…LLEVSGFKSN (95 aa).

It is found in the cell membrane. The chain is Membrane-associated lipoprotein from Ureaplasma parvum serovar 3 (strain ATCC 700970).